We begin with the raw amino-acid sequence, 408 residues long: Probable fructose-2,6-bisphosphatase C732.02c (408 aa).

An ATP-binding site is contributed by 16–24; it reads GLPASGKTS. Aspartate 88 is a catalytic residue. Residue 127-132 coordinates ATP; sequence NITDMC. Tyrosine 157 provides a ligand contact to beta-D-fructose 6-phosphate. Arginine 213 lines the beta-D-fructose 2,6-bisphosphate pocket. Catalysis depends on histidine 214, which acts as the Tele-phosphohistidine intermediate. The beta-D-fructose 2,6-bisphosphate site is built by asparagine 220 and glycine 226. The active-site Proton donor/acceptor is glutamate 285. Positions 296, 310, 314, 325, 351, and 355 each coordinate beta-D-fructose 2,6-bisphosphate. 307–310 is an ATP binding site; that stretch reads AELR. ATP is bound by residues 351 to 355 and tyrosine 387; that span reads QAILR.

It in the C-terminal section; belongs to the phosphoglycerate mutase family.

It catalyses the reaction beta-D-fructose 2,6-bisphosphate + H2O = beta-D-fructose 6-phosphate + phosphate. Its function is as follows. This is predominantly if not solely a fructose-2,6-bisphosphatase. The polypeptide is Probable fructose-2,6-bisphosphatase C732.02c (Schizosaccharomyces pombe (strain 972 / ATCC 24843) (Fission yeast)).